A 232-amino-acid chain; its full sequence is uncharacterized protein (232 aa).

A disordered region spans residues 1 to 46 (MNAHNMRGPPGDLAKVVPGSRSGWNEGSRCRQADKGDGQCRNGGRD). Positions 28–46 (SRCRQADKGDGQCRNGGRD) are enriched in basic and acidic residues.

This is an uncharacterized protein from Rhizobium meliloti (Ensifer meliloti).